We begin with the raw amino-acid sequence, 282 residues long: Probable endonuclease 4 (282 aa).

Residues His-69, His-109, Glu-145, Asp-179, His-182, His-216, Asp-229, His-231, and Glu-261 each coordinate Zn(2+).

Belongs to the AP endonuclease 2 family. Zn(2+) serves as cofactor.

The enzyme catalyses Endonucleolytic cleavage to 5'-phosphooligonucleotide end-products.. Functionally, endonuclease IV plays a role in DNA repair. It cleaves phosphodiester bonds at apurinic or apyrimidinic (AP) sites, generating a 3'-hydroxyl group and a 5'-terminal sugar phosphate. The chain is Probable endonuclease 4 from Chlorobium chlorochromatii (strain CaD3).